Here is a 116-residue protein sequence, read N- to C-terminus: Subtilisin inhibitor-like protein 4 (116 aa).

2 disulfide bridges follow: Cys38–Cys53 and Cys74–Cys104.

It belongs to the protease inhibitor I16 (SSI) family. Homodimer.

The protein localises to the secreted. In terms of biological role, inhibitor of subtilisin BPN' and trypsin. The protein is Subtilisin inhibitor-like protein 4 of Streptomyces lavendulae.